A 207-amino-acid chain; its full sequence is Thymidylate kinase (207 aa).

The interval glutamate 11–glutamate 49 is disordered. Residue glycine 12–serine 19 coordinates ATP. Positions arginine 24–leucine 38 are enriched in basic and acidic residues.

It belongs to the thymidylate kinase family.

The catalysed reaction is dTMP + ATP = dTDP + ADP. Phosphorylation of dTMP to form dTDP in both de novo and salvage pathways of dTTP synthesis. The chain is Thymidylate kinase from Dinoroseobacter shibae (strain DSM 16493 / NCIMB 14021 / DFL 12).